The following is a 348-amino-acid chain: MTIFTKERKLLLAVESSCDETSVAVIEDGDKILSNIVASQIKSHQRFGGVVPEVASRHHVEQVTICIEEALTEAKVTPEELSGVAVTYGPGLVGALLIGLSAAKAFAWAHQLPLIPVNHMAGHIYAARFVAPLEFPLMALLVSGGHTELVYMKEDGSFEIVGETRDDAAGEAYDKVGRVLGLPYPSGKEIDALAHEGTDTYQFPRAMLKEDNYDFSFSGLKSAFINTVHNAEQRGEALSTKDLAASFQASVVEVLVTKTIRACQEYPVKQLLIAGGVAANQGLREAMRHAISEQLPAVTLLIPPLKLCGDNAAMIGAAAFIEAEKNHFASYNLNAEPGVSFMTISEEG.

Fe cation contacts are provided by H119 and H123. Residues L141 to G145, D174, G187, D191, and N280 contribute to the substrate site. Residue D310 coordinates Fe cation.

Belongs to the KAE1 / TsaD family. The cofactor is Fe(2+).

The protein localises to the cytoplasm. The catalysed reaction is L-threonylcarbamoyladenylate + adenosine(37) in tRNA = N(6)-L-threonylcarbamoyladenosine(37) in tRNA + AMP + H(+). In terms of biological role, required for the formation of a threonylcarbamoyl group on adenosine at position 37 (t(6)A37) in tRNAs that read codons beginning with adenine. Is involved in the transfer of the threonylcarbamoyl moiety of threonylcarbamoyl-AMP (TC-AMP) to the N6 group of A37, together with TsaE and TsaB. TsaD likely plays a direct catalytic role in this reaction. The sequence is that of tRNA N6-adenosine threonylcarbamoyltransferase from Enterococcus faecalis (strain ATCC 700802 / V583).